Here is a 512-residue protein sequence, read N- to C-terminus: Glucose-1-phosphate adenylyltransferase small subunit 2, chloroplastic (512 aa).

The disordered stretch occupies residues 1 to 21; it reads MAAIGVLKVPPSSSSSSSSSS. Residues 1–63 constitute a chloroplast transit peptide; it reads MAAIGVLKVP…RNPFIVSPKA (63 aa). A compositionally biased stretch (low complexity) spans 12 to 21; it reads SSSSSSSSSS.

The protein belongs to the bacterial/plant glucose-1-phosphate adenylyltransferase family. As to quaternary structure, heterotetramer. Leaves and seeds.

It is found in the plastid. The protein localises to the chloroplast. The enzyme catalyses alpha-D-glucose 1-phosphate + ATP + H(+) = ADP-alpha-D-glucose + diphosphate. Its pathway is glycan biosynthesis; starch biosynthesis. Its activity is regulated as follows. Activated by 3'phosphoglycerate, inhibited by orthophosphate. Allosteric regulation. Its function is as follows. This protein plays a role in synthesis of starch. It catalyzes the synthesis of the activated glycosyl donor, ADP-glucose from Glc-1-P and ATP. In Vicia faba (Broad bean), this protein is Glucose-1-phosphate adenylyltransferase small subunit 2, chloroplastic (AGPP).